Consider the following 164-residue polypeptide: Thiol peroxidase (164 aa).

Residues 17 to 162 (IKVGDTFPDF…YDEVLQAAQA (146 aa)) form the Thioredoxin domain. Cys58 serves as the catalytic Cysteine sulfenic acid (-SOH) intermediate. A disulfide bridge links Cys58 with Cys92.

This sequence belongs to the peroxiredoxin family. Tpx subfamily. In terms of assembly, homodimer.

It catalyses the reaction a hydroperoxide + [thioredoxin]-dithiol = an alcohol + [thioredoxin]-disulfide + H2O. In terms of biological role, thiol-specific peroxidase that catalyzes the reduction of hydrogen peroxide and organic hydroperoxides to water and alcohols, respectively. Plays a role in cell protection against oxidative stress by detoxifying peroxides. This chain is Thiol peroxidase, found in Clostridium acetobutylicum (strain ATCC 824 / DSM 792 / JCM 1419 / IAM 19013 / LMG 5710 / NBRC 13948 / NRRL B-527 / VKM B-1787 / 2291 / W).